The sequence spans 315 residues: Deoxyhypusine hydroxylase (315 aa).

6 HEAT-like PBS-type repeats span residues Ile-23–Lys-52, Leu-56–Asn-82, Val-89–Asp-115, Asn-179–Asp-205, Leu-211–Asp-237, and Val-244–Asp-270. 3 residues coordinate Fe cation: His-58, His-91, and Glu-92. Fe cation is bound by residues His-213, His-246, and Glu-247.

The protein belongs to the deoxyhypusine hydroxylase family. Fe(2+) is required as a cofactor.

It carries out the reaction [eIF5A protein]-deoxyhypusine + AH2 + O2 = [eIF5A protein]-hypusine + A + H2O. It participates in protein modification; eIF5A hypusination. Functionally, catalyzes the hydroxylation of the N(6)-(4-aminobutyl)-L-lysine intermediate produced by deoxyhypusine synthase/DHPS on a critical lysine of the eukaryotic translation initiation factor 5A/eIF-5A. This is the second step of the post-translational modification of that lysine into an unusual amino acid residue named hypusine. Hypusination is unique to mature eIF-5A factor and is essential for its function. The chain is Deoxyhypusine hydroxylase (dohh-1) from Dictyostelium discoideum (Social amoeba).